Consider the following 547-residue polypeptide: Glucose-6-phosphate isomerase (547 aa).

The active-site Proton donor is Glu-351. Active-site residues include His-382 and Lys-509.

Belongs to the GPI family.

The protein localises to the cytoplasm. The enzyme catalyses alpha-D-glucose 6-phosphate = beta-D-fructose 6-phosphate. It participates in carbohydrate biosynthesis; gluconeogenesis. It functions in the pathway carbohydrate degradation; glycolysis; D-glyceraldehyde 3-phosphate and glycerone phosphate from D-glucose: step 2/4. In terms of biological role, catalyzes the reversible isomerization of glucose-6-phosphate to fructose-6-phosphate. The chain is Glucose-6-phosphate isomerase from Coxiella burnetii (strain Dugway 5J108-111).